We begin with the raw amino-acid sequence, 234 residues long: Orotidine 5'-phosphate decarboxylase (234 aa).

Residues Asp-11, Lys-33, 60–69, Thr-120, Arg-181, Gln-190, Gly-210, and Arg-211 contribute to the substrate site; that span reads DLKFHDIPNT. Lys-62 functions as the Proton donor in the catalytic mechanism.

The protein belongs to the OMP decarboxylase family. Type 1 subfamily. Homodimer.

The catalysed reaction is orotidine 5'-phosphate + H(+) = UMP + CO2. The protein operates within pyrimidine metabolism; UMP biosynthesis via de novo pathway; UMP from orotate: step 2/2. Catalyzes the decarboxylation of orotidine 5'-monophosphate (OMP) to uridine 5'-monophosphate (UMP). The chain is Orotidine 5'-phosphate decarboxylase from Aliivibrio fischeri (strain ATCC 700601 / ES114) (Vibrio fischeri).